The following is a 162-amino-acid chain: Cyclic pyranopterin monophosphate synthase (162 aa).

Residues 75-77 (LCH) and 113-114 (ME) each bind substrate. Aspartate 128 is a catalytic residue.

The protein belongs to the MoaC family. In terms of assembly, homohexamer; trimer of dimers.

It catalyses the reaction (8S)-3',8-cyclo-7,8-dihydroguanosine 5'-triphosphate = cyclic pyranopterin phosphate + diphosphate. Its pathway is cofactor biosynthesis; molybdopterin biosynthesis. Its function is as follows. Catalyzes the conversion of (8S)-3',8-cyclo-7,8-dihydroguanosine 5'-triphosphate to cyclic pyranopterin monophosphate (cPMP). The polypeptide is Cyclic pyranopterin monophosphate synthase (Burkholderia orbicola (strain MC0-3)).